A 483-amino-acid chain; its full sequence is Glutamyl-tRNA(Gln) amidotransferase subunit A (483 aa).

Active-site charge relay system residues include Lys-77 and Ser-152. Ser-176 functions as the Acyl-ester intermediate in the catalytic mechanism.

Belongs to the amidase family. GatA subfamily. In terms of assembly, heterotrimer of A, B and C subunits.

It catalyses the reaction L-glutamyl-tRNA(Gln) + L-glutamine + ATP + H2O = L-glutaminyl-tRNA(Gln) + L-glutamate + ADP + phosphate + H(+). Allows the formation of correctly charged Gln-tRNA(Gln) through the transamidation of misacylated Glu-tRNA(Gln) in organisms which lack glutaminyl-tRNA synthetase. The reaction takes place in the presence of glutamine and ATP through an activated gamma-phospho-Glu-tRNA(Gln). The polypeptide is Glutamyl-tRNA(Gln) amidotransferase subunit A (Listeria monocytogenes serotype 4b (strain F2365)).